The primary structure comprises 365 residues: PDZ and LIM domain protein 3 (365 aa).

In terms of domain architecture, PDZ spans 1-84 (MPQNVILPGP…QLCLKIDRAE (84 aa)). S18 is modified (phosphoserine). Residues 126–156 (FIIPGRSSGCSTPSGIDGGSGRSTPSSVSTL) are disordered. A compositionally biased stretch (polar residues) spans 147 to 156 (RSTPSSVSTL). In terms of domain architecture, LIM zinc-binding spans 293–352 (PLCDKCGSGIVGAVVKARDKYRHPECFVCADCNLNLKQKGYFFVEGELYCETHARARMRP).

As to quaternary structure, interacts with ACTN2. Forms a heterodimer with PDLIM4 (via LIM domain).

The protein resides in the cytoplasm. It localises to the myofibril. It is found in the sarcomere. Its subcellular location is the z line. May play a role in the organization of actin filament arrays within muscle cells. The chain is PDZ and LIM domain protein 3 (PDLIM3) from Sus scrofa (Pig).